Reading from the N-terminus, the 74-residue chain is Large ribosomal subunit protein uL30 (74 aa).

Belongs to the universal ribosomal protein uL30 family. Part of the 50S ribosomal subunit.

The polypeptide is Large ribosomal subunit protein uL30 (Micrococcus luteus (strain ATCC 4698 / DSM 20030 / JCM 1464 / CCM 169 / CCUG 5858 / IAM 1056 / NBRC 3333 / NCIMB 9278 / NCTC 2665 / VKM Ac-2230) (Micrococcus lysodeikticus)).